The primary structure comprises 224 residues: Phosphoglycolate phosphatase (224 aa).

Residue D8 is the Nucleophile of the active site. Residues D8, D10, G11, and G43 each coordinate Mg(2+). K151 serves as a coordination point for substrate. Residues D174, S175, and D178 each coordinate Mg(2+).

It belongs to the HAD-like hydrolase superfamily. Archaeal SPP-like hydrolase family. As to quaternary structure, homodimer. Mg(2+) serves as cofactor.

The catalysed reaction is 2-phosphoglycolate + H2O = glycolate + phosphate. Its activity is regulated as follows. Inhibited by Ca(2+) ions and by high chloride ion concentration. By contrast, low chloride concentration (up to 50 mM) slightly activate the enzyme. Its function is as follows. Catalyzes the dephosphorylation of 2-phosphoglycolate. Also has significant, but less efficient, pyrophosphatase activity, since it is able to catalyze the release of phosphate from inorganic pyrophosphate (PPi). The protein is Phosphoglycolate phosphatase of Thermoplasma acidophilum (strain ATCC 25905 / DSM 1728 / JCM 9062 / NBRC 15155 / AMRC-C165).